We begin with the raw amino-acid sequence, 100 residues long: Small ribosomal subunit protein uS14c (100 aa).

It belongs to the universal ribosomal protein uS14 family. As to quaternary structure, part of the 30S ribosomal subunit.

The protein localises to the plastid. The protein resides in the chloroplast. In terms of biological role, binds 16S rRNA, required for the assembly of 30S particles. The protein is Small ribosomal subunit protein uS14c of Chara vulgaris (Common stonewort).